A 348-amino-acid polypeptide reads, in one-letter code: Small ribosomal subunit biogenesis GTPase RsgA (348 aa).

The segment at 1–32 is disordered; the sequence is MAKQKLTQNQKRRIHSNNAKALDRHRRQTKKQ. In terms of domain architecture, CP-type G spans 106–274; the sequence is KNELSRPDYY…LIDSPGIREF (169 aa). GTP contacts are provided by residues 162-165 and 216-224; these read NKID and GQSGVGKSS. Zn(2+) is bound by residues Cys-298, Cys-303, His-305, and Cys-311.

The protein belongs to the TRAFAC class YlqF/YawG GTPase family. RsgA subfamily. As to quaternary structure, monomer. Associates with 30S ribosomal subunit, binds 16S rRNA. Zn(2+) is required as a cofactor.

It is found in the cytoplasm. Functionally, one of several proteins that assist in the late maturation steps of the functional core of the 30S ribosomal subunit. Helps release RbfA from mature subunits. May play a role in the assembly of ribosomal proteins into the subunit. Circularly permuted GTPase that catalyzes slow GTP hydrolysis, GTPase activity is stimulated by the 30S ribosomal subunit. This Actinobacillus succinogenes (strain ATCC 55618 / DSM 22257 / CCUG 43843 / 130Z) protein is Small ribosomal subunit biogenesis GTPase RsgA.